The sequence spans 708 residues: Nicastrin (708 aa).

A signal peptide spans 1–34 (MATARGGSGPDPGSRGLLLLSFSVVLAGLCGGNS). Over 35-668 (VERKIYIPLN…IFLIASKELE (634 aa)) the chain is Lumenal. N-linked (GlcNAc...) asparagine glycosylation is found at Asn-44, Asn-54, and Asn-128. A disulfide bridge links Cys-49 with Cys-61. A disulfide bridge links Cys-139 with Cys-158. 2 N-linked (GlcNAc...) asparagine glycosylation sites follow: Asn-186 and Asn-203. 2 disulfides stabilise this stretch: Cys-194–Cys-212 and Cys-229–Cys-247. Asn-263, Asn-386, Asn-434, Asn-463, Asn-507, Asn-529, Asn-561, Asn-572, Asn-579, Asn-593, and Asn-611 each carry an N-linked (GlcNAc...) asparagine glycan. A disulfide bridge links Cys-585 with Cys-619. Residues 669-689 (FITLIVGFSILVFSLIVTYCI) form a helical membrane-spanning segment. The Cytoplasmic portion of the chain corresponds to 690 to 708 (NAKADVLFVAPREPGAVSY).

This sequence belongs to the nicastrin family. In terms of assembly, component of the gamma-secretase complex. The functional gamma-secretase complex is composed of at least four polypeptides: a presenilin homodimer (PSEN1 or PSEN2), nicastrin (NCSTN), APH1 (APH1A or APH1B) and PEN2. Binds to proteolytic processed C-terminal fragments C83 and C99 of the amyloid precursor protein (APP). Interacts with PSEN1 and PSEN2. In terms of processing, N-glycosylated.

Its subcellular location is the membrane. The protein localises to the cytoplasmic vesicle membrane. It is found in the melanosome. Functionally, essential subunit of the gamma-secretase complex, an endoprotease complex that catalyzes the intramembrane cleavage of integral membrane proteins such as Notch receptors and APP (amyloid-beta precursor protein). The gamma-secretase complex plays a role in Notch and Wnt signaling cascades and regulation of downstream processes via its role in processing key regulatory proteins, and by regulating cytosolic CTNNB1 levels. The sequence is that of Nicastrin (Ncstn) from Rattus norvegicus (Rat).